The chain runs to 737 residues: Fibronectin type III domain-containing protein 7 (737 aa).

A signal peptide spans Met1–Ser25. Fibronectin type-III domains are found at residues Ala28 to Ala115, Ala116 to Ala203, Pro204 to Cys288, Ala289 to Cys373, Cys374 to Cys459, Ser460 to Cys544, Cys545 to Gly633, and Pro631 to Thr715. N-linked (GlcNAc...) asparagine glycosylation is present at Asn230. The N-linked (GlcNAc...) asparagine glycan is linked to Asn433.

The protein resides in the secreted. The sequence is that of Fibronectin type III domain-containing protein 7 (Fndc7) from Mus musculus (Mouse).